A 124-amino-acid chain; its full sequence is uncharacterized protein (124 aa).

Its subcellular location is the cytoplasm. The protein resides in the nucleus. This is an uncharacterized protein from Schizosaccharomyces pombe (strain 972 / ATCC 24843) (Fission yeast).